A 407-amino-acid polypeptide reads, in one-letter code: Tryptophan synthase beta chain (407 aa).

A compositionally biased stretch (polar residues) spans 1–11; it reads MSTAPSQQHAS. A disordered region spans residues 1-25; the sequence is MSTAPSQQHASAQVPDPRGRFGDFG. The residue at position 100 (Lys100) is an N6-(pyridoxal phosphate)lysine.

It belongs to the TrpB family. Tetramer of two alpha and two beta chains. Requires pyridoxal 5'-phosphate as cofactor.

The enzyme catalyses (1S,2R)-1-C-(indol-3-yl)glycerol 3-phosphate + L-serine = D-glyceraldehyde 3-phosphate + L-tryptophan + H2O. It functions in the pathway amino-acid biosynthesis; L-tryptophan biosynthesis; L-tryptophan from chorismate: step 5/5. Functionally, the beta subunit is responsible for the synthesis of L-tryptophan from indole and L-serine. This chain is Tryptophan synthase beta chain, found in Rhodopirellula baltica (strain DSM 10527 / NCIMB 13988 / SH1).